The sequence spans 135 residues: Holo-[acyl-carrier-protein] synthase (135 aa).

The Mg(2+) site is built by Asp-8 and Glu-57.

The protein belongs to the P-Pant transferase superfamily. AcpS family. It depends on Mg(2+) as a cofactor.

It localises to the cytoplasm. It catalyses the reaction apo-[ACP] + CoA = holo-[ACP] + adenosine 3',5'-bisphosphate + H(+). Functionally, transfers the 4'-phosphopantetheine moiety from coenzyme A to a Ser of acyl-carrier-protein. The sequence is that of Holo-[acyl-carrier-protein] synthase from Xanthobacter autotrophicus (strain ATCC BAA-1158 / Py2).